A 601-amino-acid chain; its full sequence is Elongation factor 4 (601 aa).

The tr-type G domain maps to 7 to 189 (ELIRNFSIIA…ALVTRLPPPK (183 aa)). GTP is bound by residues 19–24 (DHGKST) and 136–139 (NKID).

The protein belongs to the TRAFAC class translation factor GTPase superfamily. Classic translation factor GTPase family. LepA subfamily.

It is found in the cell inner membrane. The enzyme catalyses GTP + H2O = GDP + phosphate + H(+). Required for accurate and efficient protein synthesis under certain stress conditions. May act as a fidelity factor of the translation reaction, by catalyzing a one-codon backward translocation of tRNAs on improperly translocated ribosomes. Back-translocation proceeds from a post-translocation (POST) complex to a pre-translocation (PRE) complex, thus giving elongation factor G a second chance to translocate the tRNAs correctly. Binds to ribosomes in a GTP-dependent manner. This chain is Elongation factor 4, found in Acidiphilium cryptum (strain JF-5).